The sequence spans 209 residues: Thymidine kinase (209 aa).

ATP contacts are provided by residues 9–16 (SAMNAGKT) and 88–91 (DEAQ). Catalysis depends on Glu89, which acts as the Proton acceptor.

It belongs to the thymidine kinase family. In terms of assembly, homotetramer.

The protein resides in the cytoplasm. The catalysed reaction is thymidine + ATP = dTMP + ADP + H(+). This is Thymidine kinase from Xanthomonas oryzae pv. oryzae (strain MAFF 311018).